Reading from the N-terminus, the 1036-residue chain is KAT8 regulatory NSL complex subunit 1 (1036 aa).

Residue lysine 104 is modified to N6-acetyllysine. Disordered stretches follow at residues 145–211 and 226–257; these read GQTA…CTLP and NSTA…SSSN. Residues 226-244 are compositionally biased toward polar residues; it reads NSTANKSSVNSMDQPALQG. Low complexity predominate over residues 245–256; the sequence is SSRLSPSTDSSS. The residue at position 249 (serine 249) is a Phosphoserine. Lysine 262 participates in a covalent cross-link: Glycyl lysine isopeptide (Lys-Gly) (interchain with G-Cter in SUMO2). Position 268 is a phosphoserine (serine 268). Residues 285-312 are a coiled coil; that stretch reads TALLRRQADIEIRARRLQKRLQVVQAKQ. Lysine 331 is covalently cross-linked (Glycyl lysine isopeptide (Lys-Gly) (interchain with G-Cter in SUMO2)). 2 disordered regions span residues 399–423 and 739–787; these read DSDV…RADP and SPSY…RRRG. The span at 759-772 shows a compositional bias: low complexity; the sequence is STSSDTSTPTSSGS. Residues 781-813 form a required for activation of KAT8 histone acetyltransferase activity region; that stretch reads PVRRRRGESSFDINNIVIPMSVAATTRVEKLQY. The PEHE domain occupies 815–966; the sequence is EILTPSWREV…GLDEQSVQPW (152 aa). The tract at residues 841–859 is interaction with KAT8 HAT domain; the sequence is EDLSDAAFAALHAKCEEME. Residues 869–931 are disordered; it reads VPPQRRGSRS…SPISPELHSA (63 aa). The span at 886–896 shows a compositional bias: polar residues; sequence TTPQLGSANPS. The span at 906 to 919 shows a compositional bias: low complexity; that stretch reads SSSHSLSEFSHGQS. Residues serine 922 and serine 925 each carry the phosphoserine modification. Threonine 934 carries the phosphothreonine modification. Serine 976 is subject to Phosphoserine. The tract at residues 989–1020 is disordered; sequence DTAARCTRRTSGSKTGREAEVAPTSPPVVPLK.

Component of the NSL complex at least composed of MOF/KAT8, KANSL1, KANSL2, KANSL3, MCRS1, PHF20, OGT1/OGT, WDR5 and HCFC1. Interacts (via PEHE domain) with KAT8 (via HAT domain); the interaction is direct. Component of some MLL1/MLL complex, at least composed of the core components KMT2A/MLL1, ASH2L, HCFC1, WDR5 and RBBP5, as well as the facultative components BACC1, CHD8, E2F6, HSP70, INO80C, KANSL1, LAS1L, MAX, MCRS1, MGA, KAT8/MOF, PELP1, PHF20, PRP31, RING2, RUVB1/TIP49A, RUVB2/TIP49B, SENP3, TAF1, TAF4, TAF6, TAF7, TAF9 and TEX10.

The protein localises to the nucleus. The protein resides in the chromosome. Its subcellular location is the centromere. It localises to the kinetochore. It is found in the mitochondrion. The protein localises to the cytoplasm. The protein resides in the cytoskeleton. Its subcellular location is the spindle pole. In terms of biological role, non-catalytic component of the NSL histone acetyltransferase complex, a multiprotein complex that mediates histone H4 acetylation at 'Lys-5'- and 'Lys-8' (H4K5ac and H4K8ac) at transcription start sites and promotes transcription initiation. The NSL complex also acts as a regulator of gene expression in mitochondria. In addition to its role in transcription, KANSL1 also plays an essential role in spindle assembly during mitosis. Associates with microtubule ends and contributes to microtubule stability. The polypeptide is KAT8 regulatory NSL complex subunit 1 (Kansl1) (Mus musculus (Mouse)).